The chain runs to 235 residues: Ribosomal RNA small subunit methyltransferase G (235 aa).

S-adenosyl-L-methionine contacts are provided by residues glycine 98, methionine 103, 149-150 (VE), and arginine 164.

It belongs to the methyltransferase superfamily. RNA methyltransferase RsmG family.

The protein resides in the cytoplasm. It carries out the reaction guanosine(527) in 16S rRNA + S-adenosyl-L-methionine = N(7)-methylguanosine(527) in 16S rRNA + S-adenosyl-L-homocysteine. Its function is as follows. Specifically methylates the N7 position of guanine in position 527 of 16S rRNA. In Cupriavidus metallidurans (strain ATCC 43123 / DSM 2839 / NBRC 102507 / CH34) (Ralstonia metallidurans), this protein is Ribosomal RNA small subunit methyltransferase G.